A 347-amino-acid chain; its full sequence is tRNA N6-adenosine threonylcarbamoyltransferase (347 aa).

Residues histidine 113 and histidine 117 each coordinate Fe cation. Substrate is bound by residues 136–140 (IVSGG), aspartate 170, glycine 183, aspartate 187, and asparagine 282. Aspartate 310 is a binding site for Fe cation.

This sequence belongs to the KAE1 / TsaD family. Requires Fe(2+) as cofactor.

The protein localises to the cytoplasm. It carries out the reaction L-threonylcarbamoyladenylate + adenosine(37) in tRNA = N(6)-L-threonylcarbamoyladenosine(37) in tRNA + AMP + H(+). Functionally, required for the formation of a threonylcarbamoyl group on adenosine at position 37 (t(6)A37) in tRNAs that read codons beginning with adenine. Is involved in the transfer of the threonylcarbamoyl moiety of threonylcarbamoyl-AMP (TC-AMP) to the N6 group of A37, together with TsaE and TsaB. TsaD likely plays a direct catalytic role in this reaction. The sequence is that of tRNA N6-adenosine threonylcarbamoyltransferase from Bifidobacterium longum (strain NCC 2705).